We begin with the raw amino-acid sequence, 401 residues long: Nodulation protein E (401 aa).

The region spanning 2 to 400 is the Ketosynthase family 3 (KS3) domain; that stretch reads DRRVVITGMG…GTNAVLAFKQ (399 aa). Residues Cys-161, His-293, and His-330 each act as for beta-ketoacyl synthase activity in the active site. A helical transmembrane segment spans residues 328 to 347; that stretch reads HAHCIGAASALEMIACVMAI.

This sequence belongs to the thiolase-like superfamily. Beta-ketoacyl-ACP synthases family.

Its subcellular location is the cell inner membrane. Proposed to synthesize NOD factor fatty acyl chain. Involved in the synthesis of a highly unsaturated fatty acid moiety, which forms part of a lipo-oligosaccharide that is responsible for host specificity. This is Nodulation protein E (nodE) from Rhizobium meliloti (Ensifer meliloti).